The following is a 158-amino-acid chain: uncharacterized protein (158 aa).

A compositionally biased stretch (polar residues) spans 1–18 (MDLASEITSATQTSSLCS). Disordered stretches follow at residues 1 to 20 (MDLA…CSSG), 66 to 94 (LRDL…KPCL), and 111 to 158 (GSSG…GEEF). Over residues 72-90 (RGSTSSSRSPSRPVSTSAS) the composition is skewed to low complexity. Composition is skewed to polar residues over residues 111–120 (GSSGHLQSPG) and 149–158 (LSHSAQGEEF).

This is an uncharacterized protein from Homo sapiens (Human).